Reading from the N-terminus, the 223-residue chain is Dephospho-CoA kinase (223 aa).

In terms of domain architecture, DPCK spans 3–204; that stretch reads VFGLSGGAGS…AGRHRFRVAR (202 aa). ATP is bound at residue 11 to 16; it reads GSGKST.

It belongs to the CoaE family.

It is found in the cytoplasm. The enzyme catalyses 3'-dephospho-CoA + ATP = ADP + CoA + H(+). Its pathway is cofactor biosynthesis; coenzyme A biosynthesis; CoA from (R)-pantothenate: step 5/5. Catalyzes the phosphorylation of the 3'-hydroxyl group of dephosphocoenzyme A to form coenzyme A. The sequence is that of Dephospho-CoA kinase from Anaplasma marginale (strain St. Maries).